Reading from the N-terminus, the 66-residue chain is Large ribosomal subunit protein bL31 (66 aa).

Residues C16, C18, C36, and C39 each contribute to the Zn(2+) site.

Belongs to the bacterial ribosomal protein bL31 family. Type A subfamily. As to quaternary structure, part of the 50S ribosomal subunit. It depends on Zn(2+) as a cofactor.

Binds the 23S rRNA. The polypeptide is Large ribosomal subunit protein bL31 (Nitratiruptor sp. (strain SB155-2)).